The sequence spans 921 residues: Probable dipeptidyl-aminopeptidase B (921 aa).

The interval 1 to 33 (MAGHTEENAQLLSTEQESVSRHSSDSAASTAST) is disordered. The Cytoplasmic segment spans residues 1–109 (MAGHTEENAQ…NKSVDKKLRK (109 aa)). Residues 8 to 17 (NAQLLSTEQE) are compositionally biased toward polar residues. Residues 110–130 (LIWIVGGVFIGAWVLALFIFL) form a helical; Signal-anchor for type II membrane protein membrane-spanning segment. Residues 131–921 (GKQAYKHSSE…VPLQIDAAKV (791 aa)) lie on the Vacuolar side of the membrane. The N-linked (GlcNAc...) asparagine glycan is linked to Asn-362. The active-site Charge relay system is Ser-768. Asn-822 carries N-linked (GlcNAc...) asparagine glycosylation. Residues Asp-845 and His-878 each act as charge relay system in the active site.

This sequence belongs to the peptidase S9B family.

The protein resides in the vacuole membrane. The catalysed reaction is Release of an N-terminal dipeptide, Xaa-Yaa-|-Zaa-, from a polypeptide, preferentially when Yaa is Pro, provided Zaa is neither Pro nor hydroxyproline.. Type IV dipeptidyl-peptidase which removes N-terminal dipeptides sequentially from polypeptides having unsubstituted N-termini provided that the penultimate residue is proline. The sequence is that of Probable dipeptidyl-aminopeptidase B (dapB) from Sclerotinia sclerotiorum (strain ATCC 18683 / 1980 / Ss-1) (White mold).